The following is a 514-amino-acid chain: 2-isopropylmalate synthase (514 aa).

The region spanning 5–267 is the Pyruvate carboxyltransferase domain; sequence LVIFDTTLRD…DTRIHTPEIL (263 aa). Residues Asp14, His202, His204, and Asn238 each contribute to the Mn(2+) site. The regulatory domain stretch occupies residues 394 to 514; it reads RLVALKVGTQ…GSKEHPQAHV (121 aa).

Belongs to the alpha-IPM synthase/homocitrate synthase family. LeuA type 1 subfamily. As to quaternary structure, homodimer. Requires Mn(2+) as cofactor.

Its subcellular location is the cytoplasm. It carries out the reaction 3-methyl-2-oxobutanoate + acetyl-CoA + H2O = (2S)-2-isopropylmalate + CoA + H(+). It functions in the pathway amino-acid biosynthesis; L-leucine biosynthesis; L-leucine from 3-methyl-2-oxobutanoate: step 1/4. Its function is as follows. Catalyzes the condensation of the acetyl group of acetyl-CoA with 3-methyl-2-oxobutanoate (2-ketoisovalerate) to form 3-carboxy-3-hydroxy-4-methylpentanoate (2-isopropylmalate). The chain is 2-isopropylmalate synthase from Hydrogenovibrio crunogenus (strain DSM 25203 / XCL-2) (Thiomicrospira crunogena).